We begin with the raw amino-acid sequence, 452 residues long: Pup--protein ligase (452 aa).

A Mg(2+)-binding site is contributed by glutamate 9. Arginine 53 lines the ATP pocket. Tyrosine 55 serves as a coordination point for Mg(2+). Aspartate 57 functions as the Proton acceptor in the catalytic mechanism. Residue glutamate 63 coordinates Mg(2+). 2 residues coordinate ATP: threonine 66 and tryptophan 419.

This sequence belongs to the Pup ligase/Pup deamidase family. Pup-conjugating enzyme subfamily.

The enzyme catalyses ATP + [prokaryotic ubiquitin-like protein]-L-glutamate + [protein]-L-lysine = ADP + phosphate + N(6)-([prokaryotic ubiquitin-like protein]-gamma-L-glutamyl)-[protein]-L-lysine.. Its pathway is protein degradation; proteasomal Pup-dependent pathway. It functions in the pathway protein modification; protein pupylation. Its function is as follows. Catalyzes the covalent attachment of the prokaryotic ubiquitin-like protein modifier Pup to the proteasomal substrate proteins, thereby targeting them for proteasomal degradation. This tagging system is termed pupylation. The ligation reaction involves the side-chain carboxylate of the C-terminal glutamate of Pup and the side-chain amino group of a substrate lysine. The protein is Pup--protein ligase of Mycobacterium sp. (strain JLS).